A 638-amino-acid polypeptide reads, in one-letter code: Chaperone protein DnaK (638 aa).

Threonine 200 is modified (phosphothreonine; by autocatalysis). Positions 598-621 are disordered; it reads SLHMAATAEQQSGSTGAGAGASAK.

Belongs to the heat shock protein 70 family.

Acts as a chaperone. This chain is Chaperone protein DnaK, found in Xylella fastidiosa (strain M23).